The chain runs to 239 residues: MKFYDLMSKSAEDVGLQLSKEQYEKFIDYMKLLQEWNEKINLTAIIDDEEIIKKHFIDSIKAFKRDEFKIASSLIDVGTGAGFPGLPIAIMRADLNVTLLDSLNKRVSFLNTVINRIGASNVTTIHSRAEDGAKDIKLRENFDIATSRAVANMSVLSELCLPYVKVGGSFIALKGPSVDQEIIESTNAIKILGGKILEVCEINIEDTELKHNLVVVKKIDRSPKGYPRRAGLISKNPIK.

S-adenosyl-L-methionine-binding positions include Gly78, Phe83, 129 to 130 (AE), and Arg148.

The protein belongs to the methyltransferase superfamily. RNA methyltransferase RsmG family.

The protein resides in the cytoplasm. Specifically methylates the N7 position of a guanine in 16S rRNA. The sequence is that of Ribosomal RNA small subunit methyltransferase G from Clostridium beijerinckii (strain ATCC 51743 / NCIMB 8052) (Clostridium acetobutylicum).